Here is a 158-residue protein sequence, read N- to C-terminus: Transcription elongation factor GreA (158 aa).

Belongs to the GreA/GreB family.

Its function is as follows. Necessary for efficient RNA polymerase transcription elongation past template-encoded arresting sites. The arresting sites in DNA have the property of trapping a certain fraction of elongating RNA polymerases that pass through, resulting in locked ternary complexes. Cleavage of the nascent transcript by cleavage factors such as GreA or GreB allows the resumption of elongation from the new 3'terminus. GreA releases sequences of 2 to 3 nucleotides. The protein is Transcription elongation factor GreA of Rhizobium etli (strain CIAT 652).